Here is a 479-residue protein sequence, read N- to C-terminus: Calcium-dependent mitochondrial ATP-magnesium/phosphate carrier protein 3 (479 aa).

The Mitochondrial intermembrane portion of the chain corresponds to 1 to 208 (MESSKPKNRN…ISKHVKRSRL (208 aa)). EF-hand domains follow at residues 33–68 (EREIRIRSLFDFFDNSNLGFLDYAQIEKGLASLQIP), 69–104 (PEYKYARDLFRVCDANRDGRVDYQEFRRYIDAKELE), 105–135 (LYRIFQAIDVEHNGCILPEELWEALVKAGIE), and 136–171 (IDDEELARFVEHVDKDNNGTITFEEWRDFLLLYPHE). Residues Asp-82, Asn-84, Asp-86, Arg-88, and Glu-93 each contribute to the Ca(2+) site. Ca(2+)-binding residues include Asp-149, Asp-151, Asn-153, Thr-155, and Glu-160. Solcar repeat units follow at residues 203–286 (VKRS…LKPM), 294–381 (IGTS…LKDL), and 392–475 (PGPL…MKKN). Residues 209 to 226 (LLAGGLAGAVSRTATAPL) form a helical membrane-spanning segment. Residues 227–260 (DRLKVVLQVQRAHAGVLPTIKKIWREDKLMGFFR) are Mitochondrial matrix-facing. The helical transmembrane segment at 261-280 (GNGLNVMKVAPESAIKFCAY) threads the bilayer. The Mitochondrial intermembrane segment spans residues 281–303 (EMLKPMIGGEDGDIGTSGRLMAG). The chain crosses the membrane as a helical span at residues 304–317 (GMAGALAQTAIYPM). Over 318–355 (DLVKTRLQTCVSEGGKAPKLWKLTKDIWVREGPRAFYK) the chain is Mitochondrial matrix. The chain crosses the membrane as a helical span at residues 356–375 (GLFPSLLGIVPYAGIDLAAY). Residues 376–397 (ETLKDLSRTYILQDTEPGPLIQ) are Mitochondrial intermembrane-facing. The helical transmembrane segment at 398-415 (LSCGMTSGALGASCVYPL) threads the bilayer. Residues 416–449 (QVVRTRMQADSSKTTMKQEFMNTMKGEGLRGFYR) lie on the Mitochondrial matrix side of the membrane. Residues 450 to 469 (GLLPNLLKVVPAASITYIVY) form a helical membrane-spanning segment. The Mitochondrial intermembrane segment spans residues 470–479 (EAMKKNMALD).

Belongs to the mitochondrial carrier (TC 2.A.29) family. As to expression, expressed in flowers, leaves, stems, roots and seedlings, mostly in seedlings.

It is found in the mitochondrion inner membrane. With respect to regulation, counter-exchange transport activity is saturable and inhibited by pyridoxal-5'-phosphate, EDTA and EGTA. Activated by calcium Ca(2+) and manganese Mn(2+) ions, and slightly by iron Fe(2+) and zinc Zn(2+) ions. Repressed by copper ions Cu(2+) and slightly by magnesium Mg(2+) ions. Magnesium Mg(2+) ions promotes slightly ATP uptake, ATP-Mg(2+) being exchanged with ATP(4-). Functionally, calcium-dependent mitochondrial carrier protein that catalyzes the import of ATP co-transported with metal divalent cations across the mitochondrial inner membrane in exchange for phosphate (Pi). Can transport phosphate, AMP, ADP, ATP, adenosine 5'-phosphosulfate, sulfate and thiosulfate, and, to a lesser extent, other nucleotides. Binds calcium ions Ca(2+). Also mediates calcium uptake. The polypeptide is Calcium-dependent mitochondrial ATP-magnesium/phosphate carrier protein 3 (Arabidopsis thaliana (Mouse-ear cress)).